A 147-amino-acid chain; its full sequence is Bis(5'-adenosyl)-triphosphatase (147 aa).

In terms of domain architecture, HIT spans 2-109 (SFRFGQHLIK…LPRKAGDFHR (108 aa)). Residues histidine 8, asparagine 27, glutamine 83, and 89 to 92 (GQTV) contribute to the substrate site. Residues 94-98 (HVHVH) carry the Histidine triad motif motif. Catalysis depends on histidine 96, which acts as the Tele-AMP-histidine intermediate. Substrate is bound at residue histidine 98. At tyrosine 114 the chain carries Phosphotyrosine; by SRC. Phosphotyrosine is present on tyrosine 145.

In terms of assembly, homodimer. Interacts with UBE2I. Interacts with MDM2. Interacts with CTNNB1. Identified in a complex with CTNNB1 and LEF1. Post-translationally, phosphorylation at Tyr-114 by SRC is required for induction of apoptosis. In terms of tissue distribution, low levels expressed in all tissues tested. Phospho-FHIT observed in liver and kidney, but not in brain and lung. Phospho-FHIT undetected in all tested human tumor cell lines.

The protein resides in the cytoplasm. It localises to the mitochondrion. It is found in the nucleus. The catalysed reaction is P(1),P(3)-bis(5'-adenosyl) triphosphate + H2O = AMP + ADP + 2 H(+). The enzyme catalyses adenosine 5'-phosphosulfate + H2O = sulfate + AMP + 2 H(+). It carries out the reaction adenosine 5'-phosphosulfate + NH4(+) = adenosine 5'-phosphoramidate + sulfate + 2 H(+). It catalyses the reaction adenosine 5'-phosphoramidate + H2O = AMP + NH4(+). In terms of biological role, possesses dinucleoside triphosphate hydrolase activity. Cleaves P(1)-P(3)-bis(5'-adenosyl) triphosphate (Ap3A) to yield AMP and ADP. Can also hydrolyze P(1)-P(4)-bis(5'-adenosyl) tetraphosphate (Ap4A), but has extremely low activity with ATP. Exhibits adenylylsulfatase activity, hydrolyzing adenosine 5'-phosphosulfate to yield AMP and sulfate. Exhibits adenosine 5'-monophosphoramidase activity, hydrolyzing purine nucleotide phosphoramidates with a single phosphate group such as adenosine 5'monophosphoramidate (AMP-NH2) to yield AMP and NH2. Exhibits adenylylsulfate-ammonia adenylyltransferase, catalyzing the ammonolysis of adenosine 5'-phosphosulfate resulting in the formation of adenosine 5'-phosphoramidate. Also catalyzes the ammonolysis of adenosine 5-phosphorofluoridate and diadenosine triphosphate. Modulates transcriptional activation by CTNNB1 and thereby contributes to regulate the expression of genes essential for cell proliferation and survival, such as CCND1 and BIRC5. Plays a role in the induction of apoptosis via SRC and AKT1 signaling pathways. Inhibits MDM2-mediated proteasomal degradation of p53/TP53 and thereby plays a role in p53/TP53-mediated apoptosis. Induction of apoptosis depends on the ability of FHIT to bind P(1)-P(3)-bis(5'-adenosyl) triphosphate or related compounds, but does not require its catalytic activity, it may in part come from the mitochondrial form, which sensitizes the low-affinity Ca(2+) transporters, enhancing mitochondrial calcium uptake. Functions as a tumor suppressor. This is Bis(5'-adenosyl)-triphosphatase (FHIT) from Homo sapiens (Human).